Consider the following 171-residue polypeptide: Shikimate kinase (171 aa).

11-16 (ATGKTT) contributes to the ATP binding site. Threonine 15 contributes to the Mg(2+) binding site. The substrate site is built by aspartate 33, arginine 57, and glycine 79. Arginine 117 is a binding site for ATP. Arginine 136 contacts substrate.

This sequence belongs to the shikimate kinase family. As to quaternary structure, monomer. It depends on Mg(2+) as a cofactor.

It localises to the cytoplasm. The catalysed reaction is shikimate + ATP = 3-phosphoshikimate + ADP + H(+). Its pathway is metabolic intermediate biosynthesis; chorismate biosynthesis; chorismate from D-erythrose 4-phosphate and phosphoenolpyruvate: step 5/7. In terms of biological role, catalyzes the specific phosphorylation of the 3-hydroxyl group of shikimic acid using ATP as a cosubstrate. This Thermoanaerobacter pseudethanolicus (strain ATCC 33223 / 39E) (Clostridium thermohydrosulfuricum) protein is Shikimate kinase.